The sequence spans 1769 residues: Gamma-tubulin complex component 6 (1769 aa).

Disordered stretches follow at residues 809 to 842 (EAQQPQEPPSVFPSTGSQVTSTGPEHAGEGHSCD), 859 to 881 (STPSVPKSATEGADDSGAGPFST), and 1284 to 1360 (TVCS…AEAR). Positions 820 to 831 (FPSTGSQVTSTG) are enriched in polar residues. Positions 1314-1326 (PEEKGPGKSRDAE) are enriched in basic and acidic residues. Over residues 1332 to 1343 (LPSSSQEDTAVP) the composition is skewed to polar residues.

This sequence belongs to the TUBGCP family. In terms of assembly, component of the gamma-tubulin ring complex (gTuRC) consisting of TUBGCP2, TUBGCP3, TUBGCP4, TUBGCP5 and TUBGCP6 and gamma-tubulin TUBG1 or TUBG2. TUBGCP2, TUBGCP3, TUBGCP4, TUBGCP5 and TUBGCP6 assemble in a 5:5:2:1:1 stoichiometry; each is associated with a gamma-tubulin, thereby arranging 14 gamma-tubulins in a helical manner. Gamma-tubulin at the first position is blocked by TUBGCP3 at the last position, allowing 13 protafilaments to grow into a microtubule. The gTuRC (via TUBGCP3 and TUBGCP6) interacts with ACTB and MZT1; the interactions form a luminal bridge that stabilizes the initial structure during complex assembly. The gTuRC (via TUBGCP2) interacts with MZT2A/MZT2B and CDK5RAP2 (via CM1 motif); the interactions play a role in gTuRC activation.

It is found in the cytoplasm. Its subcellular location is the cytoskeleton. The protein resides in the microtubule organizing center. The protein localises to the centrosome. Component of the gamma-tubulin ring complex (gTuRC) which mediates microtubule nucleation. The gTuRC regulates the minus-end nucleation of alpha-beta tubulin heterodimers that grow into microtubule protafilaments, a critical step in centrosome duplication and spindle formation. This is Gamma-tubulin complex component 6 (Tubgcp6) from Mus musculus (Mouse).